A 910-amino-acid chain; its full sequence is Protein translocase subunit SecA (910 aa).

Residues Q87, 105-109 (GEGKT), and D508 contribute to the ATP site. The interval 848–910 (RLSQSQFQHQ…KYKHCHGQLS (63 aa)) is disordered. A compositionally biased stretch (low complexity) spans 869–880 (AQVQAAQQGVAQ). Zn(2+) contacts are provided by C894, C896, C905, and H906. Residues 900–910 (KKYKHCHGQLS) show a composition bias toward basic residues.

It belongs to the SecA family. As to quaternary structure, monomer and homodimer. Part of the essential Sec protein translocation apparatus which comprises SecA, SecYEG and auxiliary proteins SecDF-YajC and YidC. The cofactor is Zn(2+).

Its subcellular location is the cell inner membrane. It localises to the cytoplasm. The enzyme catalyses ATP + H2O + cellular proteinSide 1 = ADP + phosphate + cellular proteinSide 2.. Part of the Sec protein translocase complex. Interacts with the SecYEG preprotein conducting channel. Has a central role in coupling the hydrolysis of ATP to the transfer of proteins into and across the cell membrane, serving both as a receptor for the preprotein-SecB complex and as an ATP-driven molecular motor driving the stepwise translocation of polypeptide chains across the membrane. In Stenotrophomonas maltophilia (strain K279a), this protein is Protein translocase subunit SecA.